Consider the following 177-residue polypeptide: Large ribosomal subunit protein uL6 (177 aa).

It belongs to the universal ribosomal protein uL6 family. As to quaternary structure, part of the 50S ribosomal subunit.

This protein binds to the 23S rRNA, and is important in its secondary structure. It is located near the subunit interface in the base of the L7/L12 stalk, and near the tRNA binding site of the peptidyltransferase center. The chain is Large ribosomal subunit protein uL6 from Rickettsia canadensis (strain McKiel).